The sequence spans 252 residues: Enolase-phosphatase E1 (252 aa).

Mg(2+)-binding residues include aspartate 14 and glutamate 16. Residues 142–143 (SS) and lysine 176 contribute to the substrate site. Aspartate 201 contacts Mg(2+).

The protein belongs to the HAD-like hydrolase superfamily. MasA/MtnC family. In terms of assembly, monomer. It depends on Mg(2+) as a cofactor.

It localises to the cytoplasm. The protein resides in the nucleus. It catalyses the reaction 5-methylsulfanyl-2,3-dioxopentyl phosphate + H2O = 1,2-dihydroxy-5-(methylsulfanyl)pent-1-en-3-one + phosphate. The protein operates within amino-acid biosynthesis; L-methionine biosynthesis via salvage pathway; L-methionine from S-methyl-5-thio-alpha-D-ribose 1-phosphate: step 3/6. It participates in amino-acid biosynthesis; L-methionine biosynthesis via salvage pathway; L-methionine from S-methyl-5-thio-alpha-D-ribose 1-phosphate: step 4/6. Functionally, bifunctional enzyme that catalyzes the enolization of 2,3-diketo-5-methylthiopentyl-1-phosphate (DK-MTP-1-P) into the intermediate 2-hydroxy-3-keto-5-methylthiopentenyl-1-phosphate (HK-MTPenyl-1-P), which is then dephosphorylated to form the acireductone 1,2-dihydroxy-3-keto-5-methylthiopentene (DHK-MTPene). The chain is Enolase-phosphatase E1 from Drosophila ananassae (Fruit fly).